The following is a 181-amino-acid chain: Coatomer subunit zeta-3 (181 aa).

It belongs to the adaptor complexes small subunit family. Oligomeric complex that consists of at least the alpha, beta, beta', gamma, delta, epsilon and zeta subunits.

It is found in the cytoplasm. The protein resides in the golgi apparatus membrane. It localises to the cytoplasmic vesicle. Its subcellular location is the COPI-coated vesicle membrane. The coatomer is a cytosolic protein complex that binds to dilysine motifs and reversibly associates with Golgi non-clathrin-coated vesicles, which further mediate biosynthetic protein transport from the ER, via the Golgi up to the trans Golgi network. Coatomer complex is required for budding from Golgi membranes, and is essential for the retrograde Golgi-to-ER transport of dilysine-tagged proteins. The zeta subunit may be involved in regulating the coat assembly and, hence, the rate of biosynthetic protein transport due to its association-dissociation properties with the coatomer complex. The sequence is that of Coatomer subunit zeta-3 from Arabidopsis thaliana (Mouse-ear cress).